Reading from the N-terminus, the 391-residue chain is Alanine racemase (391 aa).

Catalysis depends on K38, which acts as the Proton acceptor; specific for D-alanine. K38 carries the post-translational modification N6-(pyridoxal phosphate)lysine. R136 contributes to the substrate binding site. Residue Y267 is the Proton acceptor; specific for L-alanine of the active site. M315 is a binding site for substrate.

It belongs to the alanine racemase family. Pyridoxal 5'-phosphate serves as cofactor.

It carries out the reaction L-alanine = D-alanine. Its pathway is amino-acid biosynthesis; D-alanine biosynthesis; D-alanine from L-alanine: step 1/1. Functionally, catalyzes the interconversion of L-alanine and D-alanine. May also act on other amino acids. This Clostridium kluyveri (strain ATCC 8527 / DSM 555 / NBRC 12016 / NCIMB 10680 / K1) protein is Alanine racemase (alr).